The following is a 275-amino-acid chain: Transmembrane protein 45A (275 aa).

5 helical membrane-spanning segments follow: residues 7-27, 51-71, 100-120, 150-170, and 218-238; these read HALPGTFFFIIGLWWCTKSIL, ILEGITIVGMALTGMAGEQFI, FFFGLLGVADILCFTISSLPV, IFVHQLLVLVVFLTGLVAFLE, and ILFLTICFCWHYAVTIVIVGM.

Belongs to the TMEM45 family.

The protein localises to the membrane. In Homo sapiens (Human), this protein is Transmembrane protein 45A (TMEM45A).